The following is a 170-amino-acid chain: Peptide deformylase (170 aa).

Residues cysteine 93 and histidine 135 each contribute to the Fe cation site. The active site involves glutamate 136. Histidine 139 is a Fe cation binding site.

Belongs to the polypeptide deformylase family. The cofactor is Fe(2+).

It carries out the reaction N-terminal N-formyl-L-methionyl-[peptide] + H2O = N-terminal L-methionyl-[peptide] + formate. In terms of biological role, removes the formyl group from the N-terminal Met of newly synthesized proteins. Requires at least a dipeptide for an efficient rate of reaction. N-terminal L-methionine is a prerequisite for activity but the enzyme has broad specificity at other positions. This is Peptide deformylase from Acidobacterium capsulatum (strain ATCC 51196 / DSM 11244 / BCRC 80197 / JCM 7670 / NBRC 15755 / NCIMB 13165 / 161).